We begin with the raw amino-acid sequence, 117 residues long: Phosphoribosyl-ATP pyrophosphatase (117 aa).

Over residues 96 to 105 the composition is skewed to basic and acidic residues; that stretch reads GVSGIEEKLS. The segment at 96 to 117 is disordered; sequence GVSGIEEKLSRSQNQPEPTKAE. Residues 106 to 117 are compositionally biased toward polar residues; sequence RSQNQPEPTKAE.

This sequence belongs to the PRA-PH family.

The protein localises to the cytoplasm. It catalyses the reaction 1-(5-phospho-beta-D-ribosyl)-ATP + H2O = 1-(5-phospho-beta-D-ribosyl)-5'-AMP + diphosphate + H(+). Its pathway is amino-acid biosynthesis; L-histidine biosynthesis; L-histidine from 5-phospho-alpha-D-ribose 1-diphosphate: step 2/9. This chain is Phosphoribosyl-ATP pyrophosphatase, found in Nitrosomonas eutropha (strain DSM 101675 / C91 / Nm57).